The primary structure comprises 99 residues: uncharacterized protein (99 aa).

This is an uncharacterized protein from Borreliella burgdorferi (strain ATCC 35210 / DSM 4680 / CIP 102532 / B31) (Borrelia burgdorferi).